The primary structure comprises 395 residues: Phosphoribulokinase, chloroplastic (395 aa).

A chloroplast-targeting transit peptide spans 1–46 (MAVSTIYSTQALNSTHFLTSSSSSKQVFLYRRQPQTNRRFNTLITC). Cysteine 61 and cysteine 100 are joined by a disulfide.

Belongs to the phosphoribulokinase family.

It localises to the plastid. It is found in the chloroplast. It carries out the reaction D-ribulose 5-phosphate + ATP = D-ribulose 1,5-bisphosphate + ADP + H(+). Its pathway is carbohydrate biosynthesis; Calvin cycle. Its activity is regulated as follows. Light regulated via thioredoxin by reversible oxidation/reduction of sulfhydryl/disulfide groups. This is Phosphoribulokinase, chloroplastic from Arabidopsis thaliana (Mouse-ear cress).